Reading from the N-terminus, the 525-residue chain is Peptide chain release factor 3 (525 aa).

A tr-type G domain is found at 8–276 (AMRRTFAIIS…AFVKEAPPPQ (269 aa)). Residues 17-24 (SHPDAGKT), 85-89 (DTPGH), and 139-142 (NKMD) each bind GTP.

It belongs to the TRAFAC class translation factor GTPase superfamily. Classic translation factor GTPase family. PrfC subfamily.

The protein resides in the cytoplasm. Increases the formation of ribosomal termination complexes and stimulates activities of RF-1 and RF-2. It binds guanine nucleotides and has strong preference for UGA stop codons. It may interact directly with the ribosome. The stimulation of RF-1 and RF-2 is significantly reduced by GTP and GDP, but not by GMP. The polypeptide is Peptide chain release factor 3 (Coxiella burnetii (strain CbuK_Q154) (Coxiella burnetii (strain Q154))).